Consider the following 312-residue polypeptide: Aquaporin-6 (312 aa).

Residues methionine 1–glutamate 50 lie on the Cytoplasmic side of the membrane. Residues phenylalanine 51–serine 71 form a helical membrane-spanning segment. At alanine 72 to cysteine 89 the chain is on the extracellular side. The chain crosses the membrane as a helical span at residues glycine 90–isoleucine 110. An NPA 1 motif is present at residues asparagine 111 to alanine 113. At asparagine 111–lysine 128 the chain is on the cytoplasmic side. Residues valine 129–valine 149 form a helical membrane-spanning segment. The Extracellular portion of the chain corresponds to asparagine 150–asparagine 183. The N-linked (GlcNAc...) asparagine glycan is linked to asparagine 183. Residues leucine 184–methionine 204 form a helical membrane-spanning segment. Topologically, residues asparagine 205–proline 213 are cytoplasmic. A helical membrane pass occupies residues alanine 214 to methionine 234. The Extracellular portion of the chain corresponds to glutamate 235 to glutamine 267. Positions asparagine 241 to alanine 243 match the NPA 2 motif. Residues tyrosine 268–tyrosine 288 form a helical membrane-spanning segment. The Cytoplasmic segment spans residues aspartate 289–alanine 312.

This sequence belongs to the MIP/aquaporin (TC 1.A.8) family.

It localises to the membrane. It catalyses the reaction H2O(in) = H2O(out). Water channel required to facilitate the transport of water across membranes. Does not mediate the transport carbon dioxide nor nitric oxide across the membrane. Plays a key role in root water transport of mycorrhizal plant such ectomycorrhizal white spruce or trembling aspen via the hydration at the hyphal-root interphase. Contributes in fungal cellular processes during the basidiocarp formation. The protein is Aquaporin-6 of Laccaria bicolor (Bicoloured deceiver).